The following is a 64-amino-acid chain: UPF0337 protein SAR0874 (64 aa).

The tract at residues 1 to 40 is disordered; the sequence is MADESKFEQAKGNVKETVGNVTDNKNLENEGKEDKASGKA. Positions 25-40 are enriched in basic and acidic residues; the sequence is KNLENEGKEDKASGKA.

It belongs to the UPF0337 (CsbD) family.

This is UPF0337 protein SAR0874 from Staphylococcus aureus (strain MRSA252).